Reading from the N-terminus, the 52-residue chain is Rubredoxin (52 aa).

Residues 1–51 form the Rubredoxin-like domain; that stretch reads MDKYECSICGYIYDEAEGDDGNVAAGTKFADLPADWVCPTCGADKDAFVKM. 4 residues coordinate Fe cation: Cys6, Cys9, Cys38, and Cys41.

Belongs to the rubredoxin family. Fe(3+) serves as cofactor.

Functionally, rubredoxin is a small nonheme, iron protein lacking acid-labile sulfide. Its single Fe, chelated to 4 Cys, functions as an electron acceptor and may also stabilize the conformation of the molecule. This chain is Rubredoxin, found in Megasphaera elsdenii.